Reading from the N-terminus, the 147-residue chain is Transthyretin (147 aa).

The signal sequence occupies residues 1–20; it reads MASRRLLLLCLAGLVLVTEA. Cysteine 30 carries the sulfocysteine modification. Lysine 35 contacts L-thyroxine. Residue glutamate 62 is modified to 4-carboxyglutamate. Glutamate 74 is an L-thyroxine binding site. N-linked (GlcNAc...) asparagine glycosylation occurs at asparagine 118. Serine 137 is a binding site for L-thyroxine.

This sequence belongs to the transthyretin family. As to quaternary structure, homotetramer. Dimer of dimers. In the homotetramer, subunits assemble around a central channel that can accommodate two ligand molecules. Interacts with RBP4. In terms of processing, sulfonation of the reactive cysteine Cys-30 enhances the stability of the native conformation of TTR, avoiding misassembly of the protein leading to amyloid formation. Detected in serum (at protein level). Detected in liver.

Its subcellular location is the secreted. Functionally, thyroid hormone-binding protein. Probably transports thyroxine from the bloodstream to the brain. The protein is Transthyretin (TTR) of Sorex araneus (Eurasian common shrew).